A 217-amino-acid polypeptide reads, in one-letter code: Thiosulfate dehydrogenase electron acceptor (217 aa).

The signal sequence occupies residues 1–28; the sequence is MRQFIPMRRVLAVATLGALFWAAPASWA. 2 consecutive Cytochrome c domains span residues 29 to 104 and 116 to 206; these read AAPP…SKLK and AAAA…AAQP. Heme c contacts are provided by Cys37, Cys40, His41, Cys137, Cys140, and His141.

Binds 2 heme c groups covalently per subunit.

Functionally, acts as an electron acceptor for the thiosulfate dehydrogenase TsdA. The chain is Thiosulfate dehydrogenase electron acceptor (tsdB) from Thiomonas intermedia (strain K12) (Thiobacillus intermedius).